A 445-amino-acid polypeptide reads, in one-letter code: MDTPPMPSLLWHKPGVAIDANIQTFLAADDVLLDREFFLYDITASTAHAQALQRIGLLTPDELDNILRELQHLTDEYRNGTFLLDTQYEDGHSAIESRLTERLGETGRKIHTGRSRNDQILVATRLWLKDRLTQLSTLNRDIAHHALQRAAAEQHLPMPGYTHLQRAVVSSAGMWWAGWAESFIDNAVRAADTHALIDCNPLGTAAGYGVNLPLDRPHTTAALGFARLQVNPICAQLSRGKFELAALEALGSATLDLRRIAWDLSLFTTSEFAFITLPPEYSTGSSIMPNKRNPDVIELMRATHASVAAARTEIEQLLSLPSGYHRDLQNSKGAIVRGFKRGLAALELLPALLSRLQWRPDTLRAAIDPGMYATDAAIEAAIAGIPFRDAYQMAAKTADTAAQGRTPETSLTARRSPGAAADLCLETLRARWHTLTQPTSDPDPR.

Belongs to the lyase 1 family. Argininosuccinate lyase subfamily.

Its subcellular location is the cytoplasm. It carries out the reaction 2-(N(omega)-L-arginino)succinate = fumarate + L-arginine. It functions in the pathway amino-acid biosynthesis; L-arginine biosynthesis; L-arginine from L-ornithine and carbamoyl phosphate: step 3/3. In Xylella fastidiosa (strain 9a5c), this protein is Argininosuccinate lyase.